Consider the following 41-residue polypeptide: Large ribosomal subunit protein bL36 (41 aa).

The protein belongs to the bacterial ribosomal protein bL36 family.

The protein is Large ribosomal subunit protein bL36 of Dinoroseobacter shibae (strain DSM 16493 / NCIMB 14021 / DFL 12).